Consider the following 226-residue polypeptide: PKHD-type hydroxylase PST_0995 (226 aa).

The region spanning 78-178 (KVFPPLFNCY…RLASFFWIQS (101 aa)) is the Fe2OG dioxygenase domain. Residues His96, Asp98, and His159 each contribute to the Fe cation site. Arg169 contacts 2-oxoglutarate.

It depends on Fe(2+) as a cofactor. Requires L-ascorbate as cofactor.

The protein is PKHD-type hydroxylase PST_0995 of Stutzerimonas stutzeri (strain A1501) (Pseudomonas stutzeri).